The chain runs to 256 residues: UstYa family oxidase phomYc (256 aa).

A helical transmembrane segment spans residues 38–58; it reads LVLVLQFVLIISLLASLHILG. N-linked (GlcNAc...) asparagine glycosylation is found at Asn64 and Asn132. An HXXHC 1 motif is present at residues 158 to 162; it reads HQLHC. N-linked (GlcNAc...) asparagine glycosylation occurs at Asn179. An HXXHC 2 motif is present at residues 193–197; it reads HIDHC.

Belongs to the ustYa family.

The protein resides in the membrane. It functions in the pathway mycotoxin biosynthesis. In terms of biological role, ustYa family oxidase; part of the gene cluster that mediates the biosynthesis of the phomopsins, a group of hexapeptide mycotoxins which infects lupins and causes lupinosis disease in livestock. Within the pathway, phomYc catalyzes the desaturation of the Ile moiety into 2,3-dehydroisoleucine (dIle). The pathway starts with the processing of the precursor phomA by several endopeptidases including kexin proteases as well as the cluster-specific S41 family peptidase phomP1 and the oligopeptidase phomG to produce 10 identical copies of the hexapeptide Tyr-Val-Ile-Pro-Ile-Asp. After being excised from the precursor peptide, the core peptides are cyclized and modified post-translationally by enzymes encoded within the gene cluster. The timing and order of proteolysis of the phomA precursor and PTMs are still unknown. Two tyrosinase-like enzymes, phomQ1 and phomQ2, catalyze the chlorination and hydroxylation of Tyr, respectively. PhomYb, is proposed to be involved in the construction of the macrocyclic structure. The other 4 ustYa family proteins may be involved in PTMs that generate the unique structure of phomopsin A. PhomYa is required for the hydroxylation of C-beta of Tyr. PhomYc, phomYd, and phomYe are responsible for the biosynthesis of 2,3-dehydroisoleucine (dIle), 2,3-dehydroaspartic acid (dAsp), and 3,4-dehydroproline (dPro), respectively. While dIle formation by phomYc is indispensable for the installation of dAsp by phomYd, the order of the other PTMs have not been elucidated yet. Most of the biosynthetic enzymes likely have broad substrate specificity, and thus, there might be a metabolic grid from a precursor to phomopsin A. The enzyme(s) responsible for the biosynthesis of 3,4-dehydrovaline (dVal) have also not been identified yet. Finally, phomM acts as an S-adenosylmethionine-dependent alpha-N-methyltransferase that catalyzes two successive N-methylation reactions, converting N-desmethyl-phomopsin A to phomopsin A and phomopsin A further to an N,N-dimethylated congener called phomopsin E. In Diaporthe leptostromiformis (Lupinosis disease fungus), this protein is UstYa family oxidase phomYc.